The following is a 259-amino-acid chain: uncharacterized protein (259 aa).

The region spanning 110-259 (QMGHPLTAWG…VHTVFHYFLT (150 aa)) is the N-acetyltransferase domain.

In terms of biological role, may be involved in maturation of the outermost layer of the spore. This is an uncharacterized protein from Bacillus subtilis (strain 168).